The sequence spans 349 residues: uncharacterized protein (349 aa).

10 helical membrane passes run 15 to 35, 53 to 73, 91 to 111, 120 to 140, 147 to 167, 179 to 199, 218 to 238, 248 to 268, 276 to 296, and 302 to 322; these read VHSPIYLALAVVIFSAANPVT, ISFCNVLFVGNLCALGLMILI, WFLLTVTAILSRAIAPGLMFS, NVVLIGRLEPVFTLILSILLL, LSMVATLISFVGVAVTVFWGV, FGLGESFVAIAAFISAITTIL, LLGTFVFFWIAVIIYGFDHFM, WMLIYGAIIVVVGQVAWLAGL, INLASLVTPILAIIFAYLILL, and AQYLGGILLLLGAILSFIDNL. 2 consecutive EamA domains span residues 39 to 164 and 191 to 319; these read IELG…VTVF and FISA…LSFI.

This sequence belongs to the EamA transporter family.

It is found in the cell membrane. This is an uncharacterized protein from Synechocystis sp. (strain ATCC 27184 / PCC 6803 / Kazusa).